The chain runs to 206 residues: Transcription factor MYB57 (206 aa).

Basic residues predominate over residues 1–11 (METTMKKKGRV). The interval 1 to 20 (METTMKKKGRVKATITSQKE) is disordered. HTH myb-type domains lie at 22-74 (EGTV…LNYL) and 75-129 (RPDV…QRHM). 2 DNA-binding regions (H-T-H motif) span residues 50–74 (WNSV…LNYL) and 102–125 (WSKI…RTKI). The tract at residues 138–162 (NHQHHCSGNSQSSGMTTQGSSGKAI) is disordered. Low complexity predominate over residues 144 to 159 (SGNSQSSGMTTQGSSG).

Expressed specifically in flowers.

It is found in the nucleus. In terms of biological role, transcription factor acting redundantly with MYB21 and MYB24 to control stamen filament elongation in the late developed flowers. Repressed at the transcript levels by DELLA proteins. The sequence is that of Transcription factor MYB57 (MYB57) from Arabidopsis thaliana (Mouse-ear cress).